A 485-amino-acid chain; its full sequence is Glutamyl-tRNA(Gln) amidotransferase subunit A (485 aa).

Catalysis depends on charge relay system residues lysine 78 and serine 153. Residue serine 177 is the Acyl-ester intermediate of the active site.

It belongs to the amidase family. GatA subfamily. Heterotrimer of A, B and C subunits.

It catalyses the reaction L-glutamyl-tRNA(Gln) + L-glutamine + ATP + H2O = L-glutaminyl-tRNA(Gln) + L-glutamate + ADP + phosphate + H(+). Allows the formation of correctly charged Gln-tRNA(Gln) through the transamidation of misacylated Glu-tRNA(Gln) in organisms which lack glutaminyl-tRNA synthetase. The reaction takes place in the presence of glutamine and ATP through an activated gamma-phospho-Glu-tRNA(Gln). This Bacillus cytotoxicus (strain DSM 22905 / CIP 110041 / 391-98 / NVH 391-98) protein is Glutamyl-tRNA(Gln) amidotransferase subunit A.